Here is a 95-residue protein sequence, read N- to C-terminus: Large ribosomal subunit protein bL28 (95 aa).

It belongs to the bacterial ribosomal protein bL28 family.

This chain is Large ribosomal subunit protein bL28, found in Dinoroseobacter shibae (strain DSM 16493 / NCIMB 14021 / DFL 12).